A 161-amino-acid chain; its full sequence is Cyclic pyranopterin monophosphate synthase (161 aa).

Residues 75–77 (LCH) and 113–114 (ME) contribute to the substrate site. Aspartate 128 is an active-site residue.

This sequence belongs to the MoaC family. Homohexamer; trimer of dimers.

It carries out the reaction (8S)-3',8-cyclo-7,8-dihydroguanosine 5'-triphosphate = cyclic pyranopterin phosphate + diphosphate. It functions in the pathway cofactor biosynthesis; molybdopterin biosynthesis. Functionally, catalyzes the conversion of (8S)-3',8-cyclo-7,8-dihydroguanosine 5'-triphosphate to cyclic pyranopterin monophosphate (cPMP). The chain is Cyclic pyranopterin monophosphate synthase from Salmonella typhi.